A 273-amino-acid polypeptide reads, in one-letter code: Proteasome subunit beta (273 aa).

The span at 1-19 shows a compositional bias: polar residues; it reads MQESTANKVAANATSSFTE. Residues 1-23 form a disordered region; the sequence is MQESTANKVAANATSSFTEHLQR. A propeptide spans 1–50 (removed in mature form; by autocatalysis); the sequence is MQESTANKVAANATSSFTEHLQRDRPELLPFNRSGQGSATAAAPLQVPHA. T51 (nucleophile) is an active-site residue.

The protein belongs to the peptidase T1B family. The 20S proteasome core is composed of 14 alpha and 14 beta subunits that assemble into four stacked heptameric rings, resulting in a barrel-shaped structure. The two inner rings, each composed of seven catalytic beta subunits, are sandwiched by two outer rings, each composed of seven alpha subunits. The catalytic chamber with the active sites is on the inside of the barrel. Has a gated structure, the ends of the cylinder being occluded by the N-termini of the alpha-subunits. Is capped by the proteasome-associated ATPase, ARC.

It localises to the cytoplasm. The catalysed reaction is Cleavage of peptide bonds with very broad specificity.. The protein operates within protein degradation; proteasomal Pup-dependent pathway. Its activity is regulated as follows. The formation of the proteasomal ATPase ARC-20S proteasome complex, likely via the docking of the C-termini of ARC into the intersubunit pockets in the alpha-rings, may trigger opening of the gate for substrate entry. Interconversion between the open-gate and close-gate conformations leads to a dynamic regulation of the 20S proteasome proteolysis activity. Its function is as follows. Component of the proteasome core, a large protease complex with broad specificity involved in protein degradation. The sequence is that of Proteasome subunit beta from Pseudarthrobacter chlorophenolicus (strain ATCC 700700 / DSM 12829 / CIP 107037 / JCM 12360 / KCTC 9906 / NCIMB 13794 / A6) (Arthrobacter chlorophenolicus).